Here is a 432-residue protein sequence, read N- to C-terminus: Adenosylhomocysteinase (432 aa).

3 residues coordinate substrate: T57, D131, and E156. T157–T159 serves as a coordination point for NAD(+). S183 carries the post-translational modification Phosphoserine. K186 and D190 together coordinate substrate. N6-(2-hydroxyisobutyryl)lysine is present on K186. Y193 carries the post-translational modification Phosphotyrosine. Residues G222–G227, E243, N248, I299–H301, N346, H353, K426, K426–Y430, and Y430 each bind NAD(+).

The protein belongs to the adenosylhomocysteinase family. As to quaternary structure, homotetramer. Interaction with AHCYL1. The cofactor is NAD(+).

The protein localises to the cytoplasm. It localises to the melanosome. It is found in the nucleus. Its subcellular location is the endoplasmic reticulum. The catalysed reaction is S-adenosyl-L-homocysteine + H2O = L-homocysteine + adenosine. The protein operates within amino-acid biosynthesis; L-homocysteine biosynthesis; L-homocysteine from S-adenosyl-L-homocysteine: step 1/1. In terms of biological role, catalyzes the hydrolysis of S-adenosyl-L-homocysteine to form adenosine and homocysteine. Binds copper ions. The sequence is that of Adenosylhomocysteinase (Ahcy) from Rattus norvegicus (Rat).